Here is a 334-residue protein sequence, read N- to C-terminus: MKEKIAYLGMGIWGFCLASLLAHKGYRVVGWARNPELVAQLQTEHRHPQAPDMPIHPNLSFTTDMVEAVDGASMIVEAVSSAGIRPVSKQLKTITDLKVPFVITSKGIEQHTGLLLSEIVVEIFGSQASRYLGYLSGPSIAREVLKGCPCSVVISAYDPDTLKKIHHAFLTPKFRVYPNSDLKGVALGGALKNIIAIACGISDGFQFGDNAKSGLVTRGLHEIRKFATIMDCRPDTLYGLAGLGDLCTTCFSSLSRNTRFGKLIAQGFTLEQAKAEIGMVVEGAYTALSAYQIAKHHKIDMPITTGIYRVLYENLDIKEGIAALLQRNTKEEYL.

The NADPH site is built by Trp-13, Arg-33, and Lys-106. Residues Lys-106, Gly-137, and Ser-139 each contribute to the sn-glycerol 3-phosphate site. NADPH is bound at residue Ala-141. The sn-glycerol 3-phosphate site is built by Lys-192, Asp-245, Ser-255, Arg-256, and Asn-257. The active-site Proton acceptor is the Lys-192. Residue Arg-256 participates in NADPH binding. NADPH is bound by residues Val-280 and Glu-282.

This sequence belongs to the NAD-dependent glycerol-3-phosphate dehydrogenase family.

Its subcellular location is the cytoplasm. The enzyme catalyses sn-glycerol 3-phosphate + NAD(+) = dihydroxyacetone phosphate + NADH + H(+). It carries out the reaction sn-glycerol 3-phosphate + NADP(+) = dihydroxyacetone phosphate + NADPH + H(+). It functions in the pathway membrane lipid metabolism; glycerophospholipid metabolism. Its function is as follows. Catalyzes the reduction of the glycolytic intermediate dihydroxyacetone phosphate (DHAP) to sn-glycerol 3-phosphate (G3P), the key precursor for phospholipid synthesis. This is Glycerol-3-phosphate dehydrogenase [NAD(P)+] from Chlamydia abortus (strain DSM 27085 / S26/3) (Chlamydophila abortus).